Consider the following 182-residue polypeptide: Adenine phosphoribosyltransferase (182 aa).

This sequence belongs to the purine/pyrimidine phosphoribosyltransferase family. Homodimer.

The protein resides in the cytoplasm. It carries out the reaction AMP + diphosphate = 5-phospho-alpha-D-ribose 1-diphosphate + adenine. The protein operates within purine metabolism; AMP biosynthesis via salvage pathway; AMP from adenine: step 1/1. Functionally, catalyzes a salvage reaction resulting in the formation of AMP, that is energically less costly than de novo synthesis. In Bordetella avium (strain 197N), this protein is Adenine phosphoribosyltransferase.